The primary structure comprises 243 residues: Biosynthetic peptidoglycan transglycosylase (243 aa).

The helical transmembrane segment at 21–43 threads the bilayer; the sequence is LLIVSLVSALMSVLQVIVFRFVD.

This sequence belongs to the glycosyltransferase 51 family.

It localises to the cell inner membrane. It catalyses the reaction [GlcNAc-(1-&gt;4)-Mur2Ac(oyl-L-Ala-gamma-D-Glu-L-Lys-D-Ala-D-Ala)](n)-di-trans,octa-cis-undecaprenyl diphosphate + beta-D-GlcNAc-(1-&gt;4)-Mur2Ac(oyl-L-Ala-gamma-D-Glu-L-Lys-D-Ala-D-Ala)-di-trans,octa-cis-undecaprenyl diphosphate = [GlcNAc-(1-&gt;4)-Mur2Ac(oyl-L-Ala-gamma-D-Glu-L-Lys-D-Ala-D-Ala)](n+1)-di-trans,octa-cis-undecaprenyl diphosphate + di-trans,octa-cis-undecaprenyl diphosphate + H(+). It participates in cell wall biogenesis; peptidoglycan biosynthesis. In terms of biological role, peptidoglycan polymerase that catalyzes glycan chain elongation from lipid-linked precursors. The chain is Biosynthetic peptidoglycan transglycosylase from Xylella fastidiosa (strain Temecula1 / ATCC 700964).